Reading from the N-terminus, the 199-residue chain is MAQQSLYFQTKLEDKVSLLPSQMVGNMENYLLENLEAKVKDKVTEHGIVLKVNRIIEYDYGIISKNNFSGTAIYRVKYECLICSPVKNLSIICLVENIVKGYIIAKNGPVIVAIPFNNIDSDKFQLTNGNIVYKNNSNNIQKGDYVKVSIINIKTNLNEKKITTIAKLLDMATNDEIKSYDNDQLLIVNGDVDDEQEFI.

Belongs to the eukaryotic RPB7/RPC8 RNA polymerase subunit family.

The protein localises to the virion. The catalysed reaction is RNA(n) + a ribonucleoside 5'-triphosphate = RNA(n+1) + diphosphate. The polypeptide is Putative DNA-directed RNA polymerase subunit L376 (Acanthamoeba polyphaga (Amoeba)).